Consider the following 404-residue polypeptide: MKQLTILGSTGSIGTSTLAVVRANPQLFAVKALVAGRNVELMTGQCLEFRPAYAAMSDKRAAEELRLRLKDLNVATEVLSGEQAACDLAALDDVDQVMAAIVGAAGLLPTLAAIRAGKKVLLANKESLVTCGRLFLEAVSASKAQLLPIDSEHNAIFQSLPASLQQQLGYASLENNGIESIILTGSGGPFRDTPLVELPHMTPDQACAHPNWSMGRKISVDSATMMNKGLEYIEARWLFNATDAQMEVILHPQSVIHSMVRYRDGSVIAQLGSPDMRTPIAHAMAWPQRVESGVQPLDFTRMSAMTFAQPDYTRYPCLKLAMDASKAGQAATTTLNAANEIAVAAFLASEIRFTDIAALNVAVLDTLSCQEPQNVDAVIAIDREARAAAQALLPRFAAKRASVI.

Residues Thr10, Gly11, Ser12, Ile13, Gly36, Arg37, Asn38, and Asn124 each coordinate NADPH. Lys125 provides a ligand contact to 1-deoxy-D-xylulose 5-phosphate. Glu126 serves as a coordination point for NADPH. Mn(2+) is bound at residue Asp150. Residues Ser151, Glu152, Ser186, and His209 each coordinate 1-deoxy-D-xylulose 5-phosphate. Glu152 is a binding site for Mn(2+). Gly215 serves as a coordination point for NADPH. Ser222, Asn227, Lys228, and Glu231 together coordinate 1-deoxy-D-xylulose 5-phosphate. Glu231 serves as a coordination point for Mn(2+).

It belongs to the DXR family. In terms of assembly, homodimer. Requires Mg(2+) as cofactor. It depends on Mn(2+) as a cofactor.

The catalysed reaction is 2-C-methyl-D-erythritol 4-phosphate + NADP(+) = 1-deoxy-D-xylulose 5-phosphate + NADPH + H(+). The protein operates within isoprenoid biosynthesis; isopentenyl diphosphate biosynthesis via DXP pathway; isopentenyl diphosphate from 1-deoxy-D-xylulose 5-phosphate: step 1/6. In terms of biological role, catalyzes the NADPH-dependent rearrangement and reduction of 1-deoxy-D-xylulose-5-phosphate (DXP) to 2-C-methyl-D-erythritol 4-phosphate (MEP). The polypeptide is 1-deoxy-D-xylulose 5-phosphate reductoisomerase (Erwinia tasmaniensis (strain DSM 17950 / CFBP 7177 / CIP 109463 / NCPPB 4357 / Et1/99)).